Here is a 202-residue protein sequence, read N- to C-terminus: Ribonuclease HII (202 aa).

One can recognise an RNase H type-2 domain in the interval 15–202; it reads QGVAGVDEAG…APIKAFGISA (188 aa). 3 residues coordinate a divalent metal cation: aspartate 21, glutamate 22, and aspartate 113.

This sequence belongs to the RNase HII family. The cofactor is Mn(2+). Mg(2+) serves as cofactor.

It is found in the cytoplasm. It catalyses the reaction Endonucleolytic cleavage to 5'-phosphomonoester.. Functionally, endonuclease that specifically degrades the RNA of RNA-DNA hybrids. The polypeptide is Ribonuclease HII (Bordetella avium (strain 197N)).